A 475-amino-acid chain; its full sequence is Glutamate--tRNA ligase (475 aa).

The short motif at 9 to 19 is the 'HIGH' region element; that stretch reads PSPTGYLHVGG. The 'KMSKS' region motif lies at 240–244; sequence KLSKR. K243 contributes to the ATP binding site.

It belongs to the class-I aminoacyl-tRNA synthetase family. Glutamate--tRNA ligase type 1 subfamily. As to quaternary structure, monomer.

It localises to the cytoplasm. It carries out the reaction tRNA(Glu) + L-glutamate + ATP = L-glutamyl-tRNA(Glu) + AMP + diphosphate. Its function is as follows. Catalyzes the attachment of glutamate to tRNA(Glu) in a two-step reaction: glutamate is first activated by ATP to form Glu-AMP and then transferred to the acceptor end of tRNA(Glu). The chain is Glutamate--tRNA ligase from Vibrio campbellii (strain ATCC BAA-1116).